The sequence spans 89 residues: Large ribosomal subunit protein bL27 (89 aa).

The interval 1–24 is disordered; the sequence is MAHKKAGGSSRNGRDSAGRRLGVK.

It belongs to the bacterial ribosomal protein bL27 family.

In Maricaulis maris (strain MCS10) (Caulobacter maris), this protein is Large ribosomal subunit protein bL27.